Reading from the N-terminus, the 212-residue chain is uncharacterized protein (212 aa).

Cys52 serves as the catalytic Acyl-thioester intermediate. Residues His89 and Asp104 contribute to the active site.

This sequence belongs to the arylamine N-acetyltransferase family.

This is an uncharacterized protein from Acanthamoeba polyphaga (Amoeba).